The chain runs to 442 residues: MKIPPQRQLAIQYNVNRVTIIKSIELLEAEGFIYTKVGSGTYVNDYLNEAHITNKWSEMMLWSSQQRSQYTVQLINKIETDDSYIHISKGELGISLMPHIQLKKAMSNTASHIEDLSFGYNNGYGYIKLRDIIVERMSKQGINVGRENVMITSGALHAIQLLSIGFLGQDAIIISNTPSYIHSTNVFEQLNFRHIDVPYNQINEINTIIDRFINFKNKAIYIEPRFNNPTGRSLTNEQKKNIITYSERHNIPIIEDDIFRDIFFSDPTPAIKTYDKLGKVIHISSFSKTIAPAIRIGWIVASEKIIEQLADVRMQIDYGSSILSQMVVYEMLKNKSYDKHLVKLRYVLKDKRDFMLNILNNLFKDIAHWEVPSGGYFVWLVFKIDIDIKYLFYELLSKEKILINPGYIYGSKEKSIRLSFAFESNENIKHALYKIYTYVKKV.

The HTH gntR-type domain occupies 2–46; that stretch reads KIPPQRQLAIQYNVNRVTIIKSIELLEAEGFIYTKVGSGTYVNDY. The H-T-H motif DNA-binding region spans 6–25; that stretch reads QRQLAIQYNVNRVTIIKSIE. Lysine 288 is modified (N6-(pyridoxal phosphate)lysine).

The protein in the C-terminal section; belongs to the class-I pyridoxal-phosphate-dependent aminotransferase family. The cofactor is pyridoxal 5'-phosphate.

In terms of biological role, positively regulates the expression of the NorB efflux pump and negatively regulates the expression of the AbcA efflux pump. Binds specifically to the promoters of norA, norB and norC and abcA genes. Could also have an aminotransferase activity. This chain is HTH-type transcriptional regulator NorG (norG), found in Staphylococcus aureus (strain Mu50 / ATCC 700699).